The primary structure comprises 136 residues: Large ribosomal subunit protein eL27A (136 aa).

Belongs to the eukaryotic ribosomal protein eL27 family. In terms of assembly, component of the large ribosomal subunit (LSU). Mature yeast ribosomes consist of a small (40S) and a large (60S) subunit. The 40S small subunit contains 1 molecule of ribosomal RNA (18S rRNA) and at least 33 different proteins. The large 60S subunit contains 3 rRNA molecules (25S, 5.8S and 5S rRNA) and at least 46 different proteins.

The protein localises to the cytoplasm. The protein resides in the nucleus. Its function is as follows. Component of the ribosome, a large ribonucleoprotein complex responsible for the synthesis of proteins in the cell. The small ribosomal subunit (SSU) binds messenger RNAs (mRNAs) and translates the encoded message by selecting cognate aminoacyl-transfer RNA (tRNA) molecules. The large subunit (LSU) contains the ribosomal catalytic site termed the peptidyl transferase center (PTC), which catalyzes the formation of peptide bonds, thereby polymerizing the amino acids delivered by tRNAs into a polypeptide chain. The nascent polypeptides leave the ribosome through a tunnel in the LSU and interact with protein factors that function in enzymatic processing, targeting, and the membrane insertion of nascent chains at the exit of the ribosomal tunnel. This chain is Large ribosomal subunit protein eL27A (rpl2701), found in Schizosaccharomyces pombe (strain 972 / ATCC 24843) (Fission yeast).